The primary structure comprises 355 residues: 3-isopropylmalate dehydrogenase (355 aa).

Substrate contacts are provided by arginine 90, arginine 100, arginine 128, and aspartate 222. Mg(2+) contacts are provided by aspartate 222, aspartate 246, and aspartate 250. Residue 280–292 (GSAPDIAGKGIAN) participates in NAD(+) binding.

It belongs to the isocitrate and isopropylmalate dehydrogenases family. LeuB type 1 subfamily. In terms of assembly, homodimer. The cofactor is Mg(2+). It depends on Mn(2+) as a cofactor.

The protein resides in the cytoplasm. It catalyses the reaction (2R,3S)-3-isopropylmalate + NAD(+) = 4-methyl-2-oxopentanoate + CO2 + NADH. It functions in the pathway amino-acid biosynthesis; L-leucine biosynthesis; L-leucine from 3-methyl-2-oxobutanoate: step 3/4. Its function is as follows. Catalyzes the oxidation of 3-carboxy-2-hydroxy-4-methylpentanoate (3-isopropylmalate) to 3-carboxy-4-methyl-2-oxopentanoate. The product decarboxylates to 4-methyl-2 oxopentanoate. This chain is 3-isopropylmalate dehydrogenase, found in Burkholderia multivorans (strain ATCC 17616 / 249).